The sequence spans 279 residues: Release factor glutamine methyltransferase (279 aa).

Positions 139 and 182 each coordinate S-adenosyl-L-methionine. Substrate is bound at residue 182–185 (NPPY).

The protein belongs to the protein N5-glutamine methyltransferase family. PrmC subfamily.

It carries out the reaction L-glutaminyl-[peptide chain release factor] + S-adenosyl-L-methionine = N(5)-methyl-L-glutaminyl-[peptide chain release factor] + S-adenosyl-L-homocysteine + H(+). Functionally, methylates the class 1 translation termination release factors RF1/PrfA and RF2/PrfB on the glutamine residue of the universally conserved GGQ motif. This is Release factor glutamine methyltransferase from Thermodesulfovibrio yellowstonii (strain ATCC 51303 / DSM 11347 / YP87).